Here is a 384-residue protein sequence, read N- to C-terminus: Odorant receptor 46a, isoform B (384 aa).

At Met-1 to Arg-37 the chain is on the cytoplasmic side. Residues Phe-38–Asn-58 traverse the membrane as a helical segment. Asn-59 is a glycosylation site (N-linked (GlcNAc...) asparagine). Over Asn-59–Glu-65 the chain is Extracellular. Residues Ile-66–Leu-86 traverse the membrane as a helical segment. Residues Lys-87–Tyr-130 are Cytoplasmic-facing. Residues Gly-131–Gly-151 form a helical membrane-spanning segment. Over Glu-152–Gly-165 the chain is Extracellular. Residues Trp-166–Leu-186 traverse the membrane as a helical segment. The Cytoplasmic portion of the chain corresponds to Asn-187–Leu-247. The helical transmembrane segment at Val-248–Val-268 threads the bilayer. The Extracellular segment spans residues Ser-269–Asp-283. The chain crosses the membrane as a helical span at residues Ala-284–Ile-304. Over Cys-305–Pro-348 the chain is Cytoplasmic. Residues Met-349–Val-369 form a helical membrane-spanning segment. Residue Asn-370 is glycosylated (N-linked (GlcNAc...) asparagine). At Asn-370 to Ser-384 the chain is on the extracellular side.

The protein belongs to the insect chemoreceptor superfamily. Heteromeric odorant receptor channel (TC 1.A.69) family. Or2a subfamily. As to quaternary structure, interacts with Orco. Complexes exist early in the endomembrane system in olfactory sensory neurons (OSNs), coupling these complexes to the conserved ciliary trafficking pathway. As to expression, isoform B is expressed in the antenna.

The protein localises to the cell membrane. Odorant receptor which mediates acceptance or avoidance behavior, depending on its substrates. The odorant receptor repertoire encodes a large collection of odor stimuli that vary widely in identity, intensity, and duration. May form a complex with Orco to form odorant-sensing units, providing sensitive and prolonged odorant signaling and calcium permeability. This is Odorant receptor 46a, isoform B (Or46a) from Drosophila melanogaster (Fruit fly).